The chain runs to 122 residues: Large ribosomal subunit protein uL14 (122 aa).

The protein belongs to the universal ribosomal protein uL14 family. Part of the 50S ribosomal subunit. Forms a cluster with proteins L3 and L19. In the 70S ribosome, L14 and L19 interact and together make contacts with the 16S rRNA in bridges B5 and B8.

Functionally, binds to 23S rRNA. Forms part of two intersubunit bridges in the 70S ribosome. The protein is Large ribosomal subunit protein uL14 of Thiobacillus denitrificans (strain ATCC 25259 / T1).